The following is a 178-amino-acid chain: MSATVRILGIDPGSRVTGFGIIDVRGRDHFYVASGCIKTPPDAPLADRIAVIVRHIGEVVAVYKPQQAAVEQVFVNVNPASTLMLGQARGAALAALVSHKLPVSEYTALQVKQAVVGKGKAAKEQVQHMVVQMLGLSGTPQADAADGLAVALTHALRNHGLAAKLNPSGMQVKRGRFQ.

Residues D11, E71, and D143 contribute to the active site. The Mg(2+) site is built by D11, E71, and D143.

It belongs to the RuvC family. In terms of assembly, homodimer which binds Holliday junction (HJ) DNA. The HJ becomes 2-fold symmetrical on binding to RuvC with unstacked arms; it has a different conformation from HJ DNA in complex with RuvA. In the full resolvosome a probable DNA-RuvA(4)-RuvB(12)-RuvC(2) complex forms which resolves the HJ. It depends on Mg(2+) as a cofactor.

The protein resides in the cytoplasm. The catalysed reaction is Endonucleolytic cleavage at a junction such as a reciprocal single-stranded crossover between two homologous DNA duplexes (Holliday junction).. In terms of biological role, the RuvA-RuvB-RuvC complex processes Holliday junction (HJ) DNA during genetic recombination and DNA repair. Endonuclease that resolves HJ intermediates. Cleaves cruciform DNA by making single-stranded nicks across the HJ at symmetrical positions within the homologous arms, yielding a 5'-phosphate and a 3'-hydroxyl group; requires a central core of homology in the junction. The consensus cleavage sequence is 5'-(A/T)TT(C/G)-3'. Cleavage occurs on the 3'-side of the TT dinucleotide at the point of strand exchange. HJ branch migration catalyzed by RuvA-RuvB allows RuvC to scan DNA until it finds its consensus sequence, where it cleaves and resolves the cruciform DNA. The sequence is that of Crossover junction endodeoxyribonuclease RuvC from Neisseria meningitidis serogroup C / serotype 2a (strain ATCC 700532 / DSM 15464 / FAM18).